The following is a 138-amino-acid chain: MAKSIPRTGSRRNVRSGSRKSTRRIPKGVIHVQASFNNTIVTVTDVRGRVISWSSAGTCGFNGTRRGTPFAAQTAAGNAIRTVVDQGMQRAEVMIKGPGLGRDAALRAIRRSGILLSFVRDVTPMPHNGCRPPKKRRV.

Positions 1–25 (MAKSIPRTGSRRNVRSGSRKSTRRI) are disordered. A compositionally biased stretch (basic residues) spans 9–25 (GSRRNVRSGSRKSTRRI).

Belongs to the universal ribosomal protein uS11 family. Part of the 30S ribosomal subunit.

It is found in the plastid. The protein resides in the chloroplast. The polypeptide is Small ribosomal subunit protein uS11c (Eucalyptus globulus subsp. globulus (Tasmanian blue gum)).